The chain runs to 226 residues: X-linked lymphocyte-regulated protein 3C (226 aa).

The tract at residues 1–66 is disordered; that stretch reads MSSRKRKATD…QARKEKQDLV (66 aa). Residues 8–18 show a composition bias toward basic and acidic residues; that stretch reads ATDTAGRHSRM. The segment covering 21 to 30 has biased composition (polar residues); sequence NLSSDDSQNP. Basic and acidic residues-rich tracts occupy residues 39–48 and 56–66; these read EVLDAGREDI and QQARKEKQDLV. The stretch at 155-210 forms a coiled coil; sequence ESLTLQKNRMEEFKSLCEKYLEKLEVLRDSRGNSIAEELRRLIATLEIKLLMLHNQ.

This sequence belongs to the XLR/SYCP3 family. Expressed in lymphoid cells.

The polypeptide is X-linked lymphocyte-regulated protein 3C (Xlr3c) (Mus musculus (Mouse)).